Here is a 290-residue protein sequence, read N- to C-terminus: Putative heme oxygenase 3 (290 aa).

Residues 1–12 (MSSEVETAEAVD) are compositionally biased toward acidic residues. Positions 1-33 (MSSEVETAEAVDESEKNSMASEKENHSKIADFS) are disordered. The span at 13–33 (ESEKNSMASEKENHSKIADFS) shows a compositional bias: basic and acidic residues. HRM repeat units follow at residues 238–243 (KCPFNA) and 255–260 (NCPFQM).

It belongs to the heme oxygenase family. In terms of tissue distribution, found in the spleen, liver, thymus, prostate, heart, kidney, brain and testis.

It carries out the reaction heme b + 3 reduced [NADPH--hemoprotein reductase] + 3 O2 = biliverdin IXalpha + CO + Fe(2+) + 3 oxidized [NADPH--hemoprotein reductase] + 3 H2O + H(+). Functionally, heme oxygenase cleaves the heme ring at the alpha methene bridge to form biliverdin. Biliverdin is subsequently converted to bilirubin by biliverdin reductase. Heme oxygenase 3 could be implicated in some heme-dependent regulatory role in the cell. The chain is Putative heme oxygenase 3 (Hmox3) from Rattus norvegicus (Rat).